Here is a 1167-residue protein sequence, read N- to C-terminus: Phenyloxazoline synthase MbtB (1167 aa).

The 77-residue stretch at 2–78 (EAVVTSSQTV…AWTRLVGERT (77 aa)) folds into the Carrier 1 domain. Ser39 is modified (O-(pantetheine 4'-phosphoryl)serine). The interval 78 to 100 (TAESPGAATQSGDTAASAGDPDA) is disordered. Residues 98–390 (PDAPFPLAPI…SSLMLDVDFT (293 aa)) are condensation/cyclization. The adenylation stretch occupies residues 575-967 (TYAELRERVL…RIAGVEAAVA (393 aa)). The 77-residue stretch at 1054–1130 (VPSTALERAL…ALARRLVDHE (77 aa)) folds into the Carrier 2 domain. Ser1089 bears the O-(pantetheine 4'-phosphoryl)serine mark.

Belongs to the ATP-dependent AMP-binding enzyme family. MbtB subfamily. Requires pantetheine 4'-phosphate as cofactor. 4'-phosphopantetheine is transferred from CoA to a specific serine in each of the two carrier protein domains, leading to their activation from apo to holo forms.

It participates in siderophore biosynthesis; mycobactin biosynthesis. In terms of biological role, involved in the initial steps of the mycobactin biosynthetic pathway. Putatively couples activated salicylic acid with serine or threonine and cyclizes this precursor to the hydroxyphenyloxazoline ring system present in this class of siderophores. This is Phenyloxazoline synthase MbtB (mbtB) from Mycobacterium sp. (strain MCS).